Reading from the N-terminus, the 300-residue chain is MKIAILSRDGTLYSCKRLLDAANKRGHVVEILDPLSCYMNISPAASSIHYKGRHLPHFDAVIPRIGSQMTFYGTAALRQFEMLGSYPLNESVAITRARDKLRSLQLLARQGIDLPMTGIAHSPDDTSDLIAMVGGAPLVVKLVEGTQGIGVVLAETRQAAESVIDAFRGLNAHILVQEYIEEAKGRDIRCLVVGNEVVAAIERQAKDGDFRSNLHRGGVARIADITEREREIAITAAQTLGLDIAGVDILRANRGPLVMEVNASPGLEGIEKTTGVDIAGKMISWIERHATPGYYLKTGG.

The 184-residue stretch at 104–287 (LQLLARQGID…IAGKMISWIE (184 aa)) folds into the ATP-grasp domain. ATP is bound by residues Lys141, 178 to 179 (EY), Asp187, and 211 to 213 (RSN). Mg(2+) is bound by residues Asp248, Glu260, and Asn262. Positions 248, 260, and 262 each coordinate Mn(2+).

The protein belongs to the RimK family. Mg(2+) serves as cofactor. Requires Mn(2+) as cofactor.

The chain is Probable alpha-L-glutamate ligase from Enterobacter sp. (strain 638).